A 122-amino-acid polypeptide reads, in one-letter code: Large ribosomal subunit protein bL12 (122 aa).

The protein belongs to the bacterial ribosomal protein bL12 family. In terms of assembly, homodimer. Part of the ribosomal stalk of the 50S ribosomal subunit. Forms a multimeric L10(L12)X complex, where L10 forms an elongated spine to which 2 to 4 L12 dimers bind in a sequential fashion. Binds GTP-bound translation factors.

Forms part of the ribosomal stalk which helps the ribosome interact with GTP-bound translation factors. Is thus essential for accurate translation. This chain is Large ribosomal subunit protein bL12, found in Streptococcus thermophilus (strain ATCC BAA-491 / LMD-9).